The primary structure comprises 197 residues: Small ribosomal subunit protein uS4B (197 aa).

One can recognise an S4 RNA-binding domain in the interval 88 to 151 (CRLDNIAYRI…RKNDEFADNF (64 aa)).

This sequence belongs to the universal ribosomal protein uS4 family. In terms of assembly, part of the 30S ribosomal subunit. Contacts protein S5. The interaction surface between S4 and S5 is involved in control of translational fidelity.

In terms of biological role, one of the primary rRNA binding proteins, it binds directly to 16S rRNA where it nucleates assembly of the body of the 30S subunit. Functionally, with S5 and S12 plays an important role in translational accuracy. The polypeptide is Small ribosomal subunit protein uS4B (Clostridium botulinum (strain Hall / ATCC 3502 / NCTC 13319 / Type A)).